Consider the following 238-residue polypeptide: LRRN4 C-terminal-like protein (238 aa).

A signal peptide spans 1–22 (MLGSPCLLWLLAVTFLVPRAQP). At 23–194 (LAPQDFEEEE…RLAVPPNPRT (172 aa)) the chain is on the extracellular side. The Fibronectin type-III domain occupies 82–176 (PPDPPRMGEV…AGGEGLEGAD (95 aa)). N132 is a glycosylation site (N-linked (GlcNAc...) asparagine). The helical transmembrane segment at 195-215 (LVHAAVGVGTALALLSCAALV) threads the bilayer. Residues 216 to 238 (WHFCLRDRWGCPRRAAARAAGAL) are Cytoplasmic-facing.

It is found in the membrane. The protein is LRRN4 C-terminal-like protein (LRRN4CL) of Homo sapiens (Human).